A 200-amino-acid chain; its full sequence is Imidazoleglycerol-phosphate dehydratase (200 aa).

Belongs to the imidazoleglycerol-phosphate dehydratase family.

The protein resides in the cytoplasm. It carries out the reaction D-erythro-1-(imidazol-4-yl)glycerol 3-phosphate = 3-(imidazol-4-yl)-2-oxopropyl phosphate + H2O. The protein operates within amino-acid biosynthesis; L-histidine biosynthesis; L-histidine from 5-phospho-alpha-D-ribose 1-diphosphate: step 6/9. This chain is Imidazoleglycerol-phosphate dehydratase, found in Chlorobium luteolum (strain DSM 273 / BCRC 81028 / 2530) (Pelodictyon luteolum).